We begin with the raw amino-acid sequence, 380 residues long: uncharacterized protein (380 aa).

Residues 256–301 (DKEEKIQKSYQYQTELITELQGRIAELEKENQSLKENVKEPETSKP) adopt a coiled-coil conformation.

This is an uncharacterized protein from Pasteurella multocida (strain Pm70).